A 133-amino-acid chain; its full sequence is Small ribosomal subunit protein uS12c (133 aa).

Belongs to the universal ribosomal protein uS12 family. As to quaternary structure, part of the 30S ribosomal subunit.

It localises to the plastid. It is found in the chloroplast. With S4 and S5 plays an important role in translational accuracy. Located at the interface of the 30S and 50S subunits. This chain is Small ribosomal subunit protein uS12c (rps12), found in Chlamydomonas reinhardtii (Chlamydomonas smithii).